The following is a 356-amino-acid chain: Probable arabinogalactan endo-beta-1,4-galactanase A (356 aa).

Residues Met-1–Ala-21 form the signal peptide. N-linked (GlcNAc...) asparagine glycosylation occurs at Asn-133. The active-site Proton donor is the Glu-157. Residue Glu-268 is the Nucleophile of the active site.

It belongs to the glycosyl hydrolase 53 family.

The protein resides in the secreted. The catalysed reaction is The enzyme specifically hydrolyzes (1-&gt;4)-beta-D-galactosidic linkages in type I arabinogalactans.. In terms of biological role, endogalactanase involved in the degradation of plant cell wall polysaccharides, and more particularly of hairy regions of pectin. In Aspergillus fumigatus (strain ATCC MYA-4609 / CBS 101355 / FGSC A1100 / Af293) (Neosartorya fumigata), this protein is Probable arabinogalactan endo-beta-1,4-galactanase A (galA).